A 71-amino-acid polypeptide reads, in one-letter code: Non-structural protein 3a (71 aa).

This chain is Non-structural protein 3a, found in Canis lupus familiaris (Dog).